The chain runs to 217 residues: Large ribosomal subunit protein uL1 (217 aa).

Serine 2 is subject to N-acetylserine. Tyrosine 11 carries the post-translational modification Phosphotyrosine. Lysine 91 and lysine 106 each carry N6-acetyllysine. Position 118 is an N6-acetyllysine; alternate (lysine 118). Residue lysine 118 forms a Glycyl lysine isopeptide (Lys-Gly) (interchain with G-Cter in SUMO1); alternate linkage. Lysine 118 participates in a covalent cross-link: Glycyl lysine isopeptide (Lys-Gly) (interchain with G-Cter in SUMO2); alternate.

The protein belongs to the universal ribosomal protein uL1 family. Component of the large ribosomal subunit.

It localises to the cytoplasm. Component of the large ribosomal subunit. The ribosome is a large ribonucleoprotein complex responsible for the synthesis of proteins in the cell. In Macaca fascicularis (Crab-eating macaque), this protein is Large ribosomal subunit protein uL1 (RPL10A).